The chain runs to 186 residues: Probable RNA 2'-phosphotransferase (186 aa).

The protein belongs to the KptA/TPT1 family.

In terms of biological role, removes the 2'-phosphate from RNA via an intermediate in which the phosphate is ADP-ribosylated by NAD followed by a presumed transesterification to release the RNA and generate ADP-ribose 1''-2''-cyclic phosphate (APPR&gt;P). May function as an ADP-ribosylase. This Agrobacterium fabrum (strain C58 / ATCC 33970) (Agrobacterium tumefaciens (strain C58)) protein is Probable RNA 2'-phosphotransferase.